Reading from the N-terminus, the 421-residue chain is UDP-N-acetylglucosamine 1-carboxyvinyltransferase 2 (421 aa).

22-23 contributes to the phosphoenolpyruvate binding site; that stretch reads KN. R95 contributes to the UDP-N-acetyl-alpha-D-glucosamine binding site. Catalysis depends on C119, which acts as the Proton donor. Position 119 is a 2-(S-cysteinyl)pyruvic acid O-phosphothioketal (C119). UDP-N-acetyl-alpha-D-glucosamine is bound by residues 124-128, D308, and V330; that span reads RPIEQ.

This sequence belongs to the EPSP synthase family. MurA subfamily.

The protein localises to the cytoplasm. It catalyses the reaction phosphoenolpyruvate + UDP-N-acetyl-alpha-D-glucosamine = UDP-N-acetyl-3-O-(1-carboxyvinyl)-alpha-D-glucosamine + phosphate. The protein operates within cell wall biogenesis; peptidoglycan biosynthesis. In terms of biological role, cell wall formation. Adds enolpyruvyl to UDP-N-acetylglucosamine. This chain is UDP-N-acetylglucosamine 1-carboxyvinyltransferase 2, found in Staphylococcus saprophyticus subsp. saprophyticus (strain ATCC 15305 / DSM 20229 / NCIMB 8711 / NCTC 7292 / S-41).